A 743-amino-acid polypeptide reads, in one-letter code: Polyribonucleotide nucleotidyltransferase (743 aa).

Mg(2+)-binding residues include aspartate 489 and aspartate 495. A KH domain is found at 556–618 (PRIEKMHIGK…PCIDAAIGMI (63 aa)). Residues 628 to 698 (GETYPGKITS…KTGKFKLSRK (71 aa)) enclose the S1 motif domain. Positions 704-743 (PEGYVEPQPRERRERREGGREGGRNFERRGGDRDHREPRG) are disordered.

The protein belongs to the polyribonucleotide nucleotidyltransferase family. Requires Mg(2+) as cofactor.

The protein localises to the cytoplasm. The enzyme catalyses RNA(n+1) + phosphate = RNA(n) + a ribonucleoside 5'-diphosphate. Its function is as follows. Involved in mRNA degradation. Catalyzes the phosphorolysis of single-stranded polyribonucleotides processively in the 3'- to 5'-direction. This is Polyribonucleotide nucleotidyltransferase from Porphyromonas gingivalis (strain ATCC 33277 / DSM 20709 / CIP 103683 / JCM 12257 / NCTC 11834 / 2561).